We begin with the raw amino-acid sequence, 306 residues long: Zinc finger protein 625 (306 aa).

Residues 31–53 form a C2H2-type 1; degenerate zinc finger; that stretch reads PRVKSCGEVSVGHASLNRHHRAD. 8 consecutive C2H2-type zinc fingers follow at residues 69–91, 97–119, 125–147, 153–175, 181–203, 209–231, 237–259, and 265–287; these read YKCTYCKKAFSDLPYFRTHEWAH, YDCEECGKSFISRSSIRRHRIMH, YKCNFCGKALMCLSLYLIHKRTH, YECKQCGKAFSHSGSLRIHERTH, YECSECGKAFHSSTCLHAHKITH, YECKQCGKAFVSFNSVRYHERTH, YECKQCGKAFRSASHLRTHGRTH, and YECKQCGKAFGCASSVKIHERTH. Phosphotyrosine is present on tyrosine 209. Positions 287-306 are disordered; sequence HTGEKPCSSNTSKGQGEKIA.

It belongs to the krueppel C2H2-type zinc-finger protein family.

Its subcellular location is the nucleus. Its function is as follows. May be involved in transcriptional regulation. The chain is Zinc finger protein 625 (ZNF625) from Homo sapiens (Human).